The following is a 176-amino-acid chain: NADH-quinone oxidoreductase subunit 10 (176 aa).

Transmembrane regions (helical) follow at residues 2-22 (SLLEGLALFLLLLSGVLVVTL), 26-46 (IHAALALILNFLVLAGVYVAL), 56-76 (VIVYAGAIVVLFLFVIMLLFA), 91-111 (PLAALLALGVAGILAAGLWGL), and 137-157 (FVLLAVGFLLMAATVVAVALV).

Belongs to the complex I subunit 6 family. As to quaternary structure, NDH-1 is composed of 15 different subunits, Nqo1 to Nqo15. The complex has a L-shaped structure, with the hydrophobic arm (subunits Nqo7, Nqo8 and Nqo10 to Nqo14) embedded in the membrane and the hydrophilic peripheral arm (subunits Nqo1 to Nqo6, Nqo9 and Nqo15) protruding into the bacterial cytoplasm. The hydrophilic domain contains all the redox centers.

It localises to the cell inner membrane. The enzyme catalyses a quinone + NADH + 5 H(+)(in) = a quinol + NAD(+) + 4 H(+)(out). Its function is as follows. NDH-1 shuttles electrons from NADH, via FMN and iron-sulfur (Fe-S) centers, to quinones in the respiratory chain. The immediate electron acceptor for the enzyme in this species is menaquinone. Couples the redox reaction to proton translocation (for every two electrons transferred, four hydrogen ions are translocated across the cytoplasmic membrane), and thus conserves the redox energy in a proton gradient required for the synthesis of ATP. In Thermus thermophilus (strain ATCC 27634 / DSM 579 / HB8), this protein is NADH-quinone oxidoreductase subunit 10 (nqo10).